Reading from the N-terminus, the 48-residue chain is Toxin CSTX-15 (48 aa).

4 disulfide bridges follow: Cys-3–Cys-18, Cys-10–Cys-27, Cys-17–Cys-42, and Cys-29–Cys-40.

The protein belongs to the neurotoxin 19 (CSTX) family. 12 subfamily. Heterodimer of A and B chains; disulfide-linked. In terms of processing, contains 4 disulfide bonds. Expressed by the venom gland.

The protein resides in the secreted. The sequence is that of Toxin CSTX-15 from Cupiennius salei (American wandering spider).